We begin with the raw amino-acid sequence, 258 residues long: Regulatory protein RecX (258 aa).

The protein belongs to the RecX family.

It localises to the cytoplasm. Functionally, modulates RecA activity. The polypeptide is Regulatory protein RecX (Streptococcus pneumoniae serotype 19F (strain G54)).